Reading from the N-terminus, the 262-residue chain is 14-3-3-like protein B (262 aa).

The protein belongs to the 14-3-3 family.

The protein is 14-3-3-like protein B of Hordeum vulgare (Barley).